We begin with the raw amino-acid sequence, 110 residues long: Large ribosomal subunit protein uL22 (110 aa).

The protein belongs to the universal ribosomal protein uL22 family. Part of the 50S ribosomal subunit.

In terms of biological role, this protein binds specifically to 23S rRNA; its binding is stimulated by other ribosomal proteins, e.g. L4, L17, and L20. It is important during the early stages of 50S assembly. It makes multiple contacts with different domains of the 23S rRNA in the assembled 50S subunit and ribosome. Its function is as follows. The globular domain of the protein is located near the polypeptide exit tunnel on the outside of the subunit, while an extended beta-hairpin is found that lines the wall of the exit tunnel in the center of the 70S ribosome. This is Large ribosomal subunit protein uL22 from Shewanella loihica (strain ATCC BAA-1088 / PV-4).